The following is a 285-amino-acid chain: Complement C1q tumor necrosis factor-related protein 2 (285 aa).

The signal sequence occupies residues M1–A15. A disordered region spans residues Q33–G144. The Collagen-like domain maps to G40–C141. The span at P41–P51 shows a compositional bias: pro residues. The segment covering P53–K65 has biased composition (low complexity). Over residues D66–S78 the composition is skewed to basic and acidic residues. Over residues P84–H120 the composition is skewed to low complexity. Residues S145 to D281 enclose the C1q domain.

As to quaternary structure, may interact with ERFE. As to expression, expressed in adipose tissue.

The protein localises to the secreted. Its function is as follows. Involved in the regulation of lipid metabolism in adipose tissue and liver. This is Complement C1q tumor necrosis factor-related protein 2 (C1QTNF2) from Homo sapiens (Human).